The sequence spans 282 residues: Elongation factor Ts (282 aa).

Residues 80-83 (TDFV) form an involved in Mg(2+) ion dislocation from EF-Tu region.

The protein belongs to the EF-Ts family.

The protein localises to the cytoplasm. Associates with the EF-Tu.GDP complex and induces the exchange of GDP to GTP. It remains bound to the aminoacyl-tRNA.EF-Tu.GTP complex up to the GTP hydrolysis stage on the ribosome. The polypeptide is Elongation factor Ts (Aliivibrio salmonicida (strain LFI1238) (Vibrio salmonicida (strain LFI1238))).